A 304-amino-acid chain; its full sequence is Recombination-associated protein RdgC (304 aa).

The protein belongs to the RdgC family.

It localises to the cytoplasm. It is found in the nucleoid. Its function is as follows. May be involved in recombination. This Shewanella baltica (strain OS185) protein is Recombination-associated protein RdgC.